The primary structure comprises 358 residues: DNA polymerase IV (358 aa).

The 182-residue stretch at 4-185 (IIHVDMDCFY…LPLIKIPGVG (182 aa)) folds into the UmuC domain. Mg(2+) is bound by residues Asp8 and Asp103. Glu104 is a catalytic residue.

The protein belongs to the DNA polymerase type-Y family. Monomer. Requires Mg(2+) as cofactor.

It is found in the cytoplasm. The catalysed reaction is DNA(n) + a 2'-deoxyribonucleoside 5'-triphosphate = DNA(n+1) + diphosphate. Poorly processive, error-prone DNA polymerase involved in untargeted mutagenesis. Copies undamaged DNA at stalled replication forks, which arise in vivo from mismatched or misaligned primer ends. These misaligned primers can be extended by PolIV. Exhibits no 3'-5' exonuclease (proofreading) activity. May be involved in translesional synthesis, in conjunction with the beta clamp from PolIII. This Shewanella pealeana (strain ATCC 700345 / ANG-SQ1) protein is DNA polymerase IV.